Here is a 150-residue protein sequence, read N- to C-terminus: Arginine repressor (150 aa).

It belongs to the ArgR family.

It localises to the cytoplasm. It participates in amino-acid biosynthesis; L-arginine biosynthesis [regulation]. Its function is as follows. Regulates arginine biosynthesis genes. The sequence is that of Arginine repressor from Ruminiclostridium cellulolyticum (strain ATCC 35319 / DSM 5812 / JCM 6584 / H10) (Clostridium cellulolyticum).